The chain runs to 242 residues: Small ribosomal subunit protein uS2 (242 aa).

This sequence belongs to the universal ribosomal protein uS2 family.

This chain is Small ribosomal subunit protein uS2, found in Photobacterium profundum (strain SS9).